Reading from the N-terminus, the 835-residue chain is Leucine--tRNA ligase (835 aa).

The 'HIGH' region signature appears at 36–46; sequence PYPSGKIHVGH. The 'KMSKS' region signature appears at 602-606; the sequence is KMSKS. K605 is a binding site for ATP.

This sequence belongs to the class-I aminoacyl-tRNA synthetase family.

It is found in the cytoplasm. The enzyme catalyses tRNA(Leu) + L-leucine + ATP = L-leucyl-tRNA(Leu) + AMP + diphosphate. This Rickettsia peacockii (strain Rustic) protein is Leucine--tRNA ligase.